A 136-amino-acid polypeptide reads, in one-letter code: Histone H3.3 (136 aa).

Positions 1–42 are disordered; the sequence is MARTKQTARKSTGGKAPRKQLASKAARKSAPVSGGVKKPHRY. Lys5 bears the N6,N6,N6-trimethyllysine; alternate mark. An N6,N6-dimethyllysine; alternate modification is found at Lys5. N6-methyllysine; alternate occurs at positions 5 and 10. Lys10 carries the post-translational modification N6-acetyllysine; alternate. Position 11 is a phosphoserine (Ser11). N6,N6-dimethyllysine; alternate is present on Lys15. An N6-acetyllysine; alternate mark is found at Lys15, Lys19, Lys24, Lys28, and Lys37. Lys19, Lys24, Lys28, and Lys37 each carry N6-methyllysine; alternate. N6,N6,N6-trimethyllysine; alternate is present on residues Lys28 and Lys37. 2 positions are modified to N6,N6-dimethyllysine; alternate: Lys28 and Lys37. 2 positions are modified to N6-acetyllysine: Lys57 and Lys65. Lys80 is modified (N6,N6,N6-trimethyllysine; alternate). Lys80 is subject to N6,N6-dimethyllysine; alternate. Position 80 is an N6-methyllysine; alternate (Lys80).

This sequence belongs to the histone H3 family. In terms of assembly, the nucleosome is a histone octamer containing two molecules each of H2A, H2B, H3 and H4 assembled in one H3-H4 heterotetramer and two H2A-H2B heterodimers. The octamer wraps approximately 147 bp of DNA. Phosphorylated by IPL1 to form H3S10ph. H3S10ph promotes subsequent H3K14ac formation and is required for transcriptional activation through TBP recruitment to the promoters. In terms of processing, mono-, di- and trimethylated by the COMPASS complex to form H3K4me1/2/3. H3K4me activates gene expression by regulating transcription elongation and plays a role in telomere length maintenance. H3K4me enrichment correlates with transcription levels, and occurs in a 5' to 3' gradient with H3K4me3 enrichment at the 5'-end of genes, shifting to H3K4me2 and then H3K4me1. Methylated by SET2 to form H3K36me. H3K36me represses gene expression. Methylated by DOT1 to form H3K79me. H3K79me is required for association of SIR proteins with telomeric regions and for telomeric silencing. The COMPASS-mediated formation of H3K4me2/3 and the DOT1-mediated formation of H3K79me require H2BK123ub1. Post-translationally, acetylation of histone H3 leads to transcriptional activation. H3K14ac formation by GCN5 is promoted by H3S10ph. H3K14ac can also be formed by ESA1. H3K56ac formation occurs predominantly in newly synthesized H3 molecules during G1, S and G2/M of the cell cycle and may be involved in DNA repair.

It localises to the nucleus. The protein resides in the chromosome. Core component of nucleosome. Nucleosomes wrap and compact DNA into chromatin, limiting DNA accessibility to the cellular machineries which require DNA as a template. Histones thereby play a central role in transcription regulation, DNA repair, DNA replication and chromosomal stability. DNA accessibility is regulated via a complex set of post-translational modifications of histones, also called histone code, and nucleosome remodeling. The protein is Histone H3.3 (HHT3) of Candida albicans (strain SC5314 / ATCC MYA-2876) (Yeast).